Consider the following 262-residue polypeptide: Acyl-[acyl-carrier-protein]--UDP-N-acetylglucosamine O-acyltransferase (262 aa).

Belongs to the transferase hexapeptide repeat family. LpxA subfamily. Homotrimer.

The protein localises to the cytoplasm. It carries out the reaction a (3R)-hydroxyacyl-[ACP] + UDP-N-acetyl-alpha-D-glucosamine = a UDP-3-O-[(3R)-3-hydroxyacyl]-N-acetyl-alpha-D-glucosamine + holo-[ACP]. Its pathway is glycolipid biosynthesis; lipid IV(A) biosynthesis; lipid IV(A) from (3R)-3-hydroxytetradecanoyl-[acyl-carrier-protein] and UDP-N-acetyl-alpha-D-glucosamine: step 1/6. In terms of biological role, involved in the biosynthesis of lipid A, a phosphorylated glycolipid that anchors the lipopolysaccharide to the outer membrane of the cell. This chain is Acyl-[acyl-carrier-protein]--UDP-N-acetylglucosamine O-acyltransferase, found in Burkholderia mallei (strain NCTC 10247).